The sequence spans 103 residues: Pterin-4-alpha-carbinolamine dehydratase 2 (103 aa).

Belongs to the pterin-4-alpha-carbinolamine dehydratase family. Highest level found in the kidney, liver, heart and ovarian follicles.

It catalyses the reaction (4aS,6R)-4a-hydroxy-L-erythro-5,6,7,8-tetrahydrobiopterin = (6R)-L-erythro-6,7-dihydrobiopterin + H2O. Involved in tetrahydrobiopterin biosynthesis. Seems to both prevent the formation of 7-pterins and accelerate the formation of quinonoid-BH2. Functionally, regulates the dimerization of homeodomain protein HNF-1-alpha and enhances its transcriptional activity. The protein is Pterin-4-alpha-carbinolamine dehydratase 2 (PCBD2) of Gallus gallus (Chicken).